The sequence spans 223 residues: SCMKAAPMKEVSIRGQGSLAYPGLRTQGNLETLGGPNDATRGLTSLADTFEHVIEELLDEQQVIQPSKENKDADLYSTRVMLSSQVPLEPPLLFLLEEYKNYLDAANMSMRVRRHSDPARRGELSVCDSTSEWVTAAEKKTAVDMSGATVTVLEKVPVPKGQLKQYFYETKCSSKGYAKEGCRGIDKRYWNSQCRTTQSFVRALTMDNKKRVGWRFIRIDTSC.

The signal sequence occupies residues 1 to 5 (SCMKA). Residues 6–114 (APMKEVSIRG…AANMSMRVRR (109 aa)) constitute a propeptide that is removed on maturation. An N-linked (GlcNAc...) asparagine glycan is attached at N107. 2 disulfide bridges follow: C127–C194 and C172–C223.

This sequence belongs to the NGF-beta family.

It is found in the secreted. In terms of biological role, promotes the survival of neuronal populations that are all located either in the central nervous system or directly connected to it. The polypeptide is Neurotrophic factor BDNF precursor form (BDNF) (Boa constrictor (Boa)).